The chain runs to 150 residues: Phosphoribosyl-AMP cyclohydrolase (150 aa).

Asp92 is a Mg(2+) binding site. Residue Cys93 participates in Zn(2+) binding. Residues Asp94 and Asp96 each coordinate Mg(2+). Positions 111 and 118 each coordinate Zn(2+).

It belongs to the PRA-CH family. As to quaternary structure, homodimer. The cofactor is Mg(2+). Zn(2+) serves as cofactor.

It is found in the cytoplasm. The enzyme catalyses 1-(5-phospho-beta-D-ribosyl)-5'-AMP + H2O = 1-(5-phospho-beta-D-ribosyl)-5-[(5-phospho-beta-D-ribosylamino)methylideneamino]imidazole-4-carboxamide. It participates in amino-acid biosynthesis; L-histidine biosynthesis; L-histidine from 5-phospho-alpha-D-ribose 1-diphosphate: step 3/9. Its function is as follows. Catalyzes the hydrolysis of the adenine ring of phosphoribosyl-AMP. The sequence is that of Phosphoribosyl-AMP cyclohydrolase from Agrobacterium fabrum (strain C58 / ATCC 33970) (Agrobacterium tumefaciens (strain C58)).